A 568-amino-acid polypeptide reads, in one-letter code: CDK5 and ABL1 enzyme substrate 1 (568 aa).

A compositionally biased stretch (low complexity) spans 1–31 (MAAATATAGTAACSSSSSSRGGSTDAAATSG). Disordered regions lie at residues 1–94 (MAAA…PGAR) and 130–169 (PSLVPRVLGEPSQPPRSAPAVTGAQLQLPDGPGGAGQEEL). The tract at residues 1-98 (MAAATATAGT…TKPGARARLS (98 aa)) is interaction with TDRD7. Pro residues predominate over residues 33-45 (QPPPPPPATAPPE). Positions 46–56 (PLRKPRMDPRR) are enriched in basic and acidic residues. The interaction with CDK3 stretch occupies residues 140 to 427 (PSQPPRSAPA…TTVIDYVKPS (288 aa)). Phosphoserine is present on Ser248. A Phosphoserine; by CDK2 and CDK3 modification is found at Ser274. Position 350 is a phosphothreonine (Thr350).

The protein belongs to the cyclin family. In terms of assembly, found in a complex with p53/TP53. Found in a number of complexes with CDK2, CDK3, CDK5, ABL1, TDRD7, CDK17, CCNA1, CCNE1 and TP73. Interacts with CDK2, CDK3, CDK5, ABL1 and TDRD7. Post-translationally, phosphorylated on Ser-274 by CCNE1/CDK3. Phosphorylated on serine/threonine residues by CDK5 and on tyrosine residues by ABL1. Also phosphorylated in vitro by CCNA1/CDK2, CCNE1/CDK2, CCNA1/CDK3 and CCNE1/CDK3. As to expression, ubiquitous. Expressed in postnatal day 1 (P1), in postmitotic neurons of the subplate, cortex (V/VI) and marginal zone; in postnatal day 7 (P7), in all layers of the cerebral cortex and in the CA1 and CA2 regions of the hippocampus (at protein level). Highly expressed in brain, kidney, liver and lung.

The protein localises to the nucleus. Its subcellular location is the cytoplasm. It localises to the cell projection. The protein resides in the growth cone. In terms of biological role, cyclin-dependent kinase binding protein. Enhances cyclin-dependent kinase tyrosine phosphorylation by nonreceptor tyrosine kinases, such as that of CDK5 by activated ABL1, which leads to increased CDK5 activity and is critical for neuronal development, and that of CDK2 by WEE1, which leads to decreased CDK2 activity and growth inhibition. Positively affects neuronal outgrowth. Plays a role as a regulator for p53/p73-induced cell death. In Mus musculus (Mouse), this protein is CDK5 and ABL1 enzyme substrate 1 (Cables1).